We begin with the raw amino-acid sequence, 191 residues long: Calcium-activated potassium channel subunit beta-1 (191 aa).

The Cytoplasmic segment spans residues 1–15 (MGKKLVMAQKRGETR). A helical membrane pass occupies residues 16–36 (ALCLGVAMVMCAVIAYYILGT). At 37 to 157 (TMLPLYQKSV…YRRLYGPQTL (121 aa)) the chain is on the extracellular side. Residues N80 and N142 are each glycosylated (N-linked (GlcNAc...) asparagine). The chain crosses the membrane as a helical span at residues 158-178 (LFSLFWPTFLLTGGLLIIAMV). Residues 179 to 191 (KINQSLSILAAQR) lie on the Cytoplasmic side of the membrane.

It belongs to the KCNMB (TC 8.A.14.1) family. KCNMB1 subfamily. In terms of assembly, interacts with KCNMA1 tetramer. There are probably 4 molecules of KCMNB1 per KCNMA1 tetramer. In terms of processing, N-glycosylated.

The protein resides in the membrane. Its function is as follows. Regulatory subunit of the calcium activated potassium KCNMA1 (maxiK) channel. Modulates the calcium sensitivity and gating kinetics of KCNMA1, thereby contributing to KCNMA1 channel diversity. Increases the apparent Ca(2+)/voltage sensitivity of the KCNMA1 channel. It also modifies KCNMA1 channel kinetics and alters its pharmacological properties. It slows down the activation and the deactivation kinetics of the channel. Acts as a negative regulator of smooth muscle contraction by enhancing the calcium sensitivity to KCNMA1. Its presence is also a requirement for internal binding of the KCNMA1 channel opener dehydrosoyasaponin I (DHS-1) triterpene glycoside and for external binding of the agonist hormone 17-beta-estradiol (E2). Increases the binding activity of charybdotoxin (CTX) toxin to KCNMA1 peptide blocker by increasing the CTX association rate and decreasing the dissociation rate. The sequence is that of Calcium-activated potassium channel subunit beta-1 (KCNMB1) from Canis lupus familiaris (Dog).